A 405-amino-acid polypeptide reads, in one-letter code: S-arrestin (405 aa).

T234 is subject to Phosphothreonine.

The protein belongs to the arrestin family. As to quaternary structure, monomer. Homodimer. Homotetramer. Interacts with RHO (via the phosphorylated C-terminus). In terms of tissue distribution, detected in retina, in the proximal portion of the outer segment of rod photoreceptor cells (at protein level).

It localises to the cell projection. The protein resides in the cilium. The protein localises to the photoreceptor outer segment. It is found in the membrane. In terms of biological role, binds to photoactivated, phosphorylated RHO and terminates RHO signaling via G-proteins by competing with G-proteins for the same binding site on RHO. May play a role in preventing light-dependent degeneration of retinal photoreceptor cells. The protein is S-arrestin (SAG) of Homo sapiens (Human).